Reading from the N-terminus, the 533-residue chain is Neuropilin and tolloid-like protein 1 (533 aa).

The signal sequence occupies residues 1-22 (MIYGRSLFHIIASLIILHSSGA). The Extracellular portion of the chain corresponds to 23-344 (TKKGTEKQIT…LDQLTNTSGT (322 aa)). Intrachain disulfides connect Cys-41-Cys-68, Cys-96-Cys-118, Cys-172-Cys-202, Cys-229-Cys-251, Cys-292-Cys-304, Cys-299-Cys-317, and Cys-311-Cys-326. CUB domains are found at residues 41 to 155 (CGTW…YNFT) and 172 to 287 (CEFE…FTSF). The region spanning 291–327 (PCEGNTFFCHSNMCINNTLVCNGLQNCVYPWDENHCK) is the LDL-receptor class A domain. N-linked (GlcNAc...) asparagine glycosylation is present at Asn-306. N-linked (GlcNAc...) asparagine glycosylation occurs at Asn-340. Residues 345 to 365 (VIGVTSCIVIILIIVSVIVQI) traverse the membrane as a helical segment. The Cytoplasmic segment spans residues 366–533 (KQPRKKYVQR…HESEYNTTRV (168 aa)). Tyr-417 is subject to Phosphotyrosine. The short motif at 531–533 (TRV) is the PDZ-binding element.

In terms of assembly, interacts with PLZ domains of DLG2, DLG3 and DLG4 via its C-terminal TRV domain. Interacts with GRIN2A and GRIN2B via its CUB domains. As to expression, expressed only in brain. Present throughout the central nervous system. Highly expressed in the hippocampal CA3 region, olfactory bulb and tubercle, caudate putamen, and neocortex in the adult brain.

It is found in the membrane. Its subcellular location is the postsynaptic density membrane. Its function is as follows. Involved in the development and/or maintenance of neuronal circuitry. Accessory subunit of the neuronal N-methyl-D-aspartate receptor (NMDAR) critical for maintaining the abundance of GRIN2A-containing NMDARs in the postsynaptic density. Regulates long-term NMDA receptor-dependent synaptic plasticity and cognition, at least in the context of spatial learning and memory. In Mus musculus (Mouse), this protein is Neuropilin and tolloid-like protein 1 (Neto1).